An 80-amino-acid polypeptide reads, in one-letter code: Pancreatic polypeptide (80 aa).

Residues 1-25 form the signal peptide; the sequence is MPPRWASLLLLACSLLLLAVPPGTA. Position 61 is a tyrosine amide (Tyr61). A propeptide spanning residues 65 to 80 is cleaved from the precursor; it reads SSSRVLCEEPMGAAGC.

This sequence belongs to the NPY family.

It is found in the secreted. In terms of biological role, hormone secreted by pancreatic cells that acts as a regulator of pancreatic and gastrointestinal functions. The protein is Pancreatic polypeptide (PPY) of Gallus gallus (Chicken).